Here is a 79-residue protein sequence, read N- to C-terminus: Small cysteine-rich protein 2 (79 aa).

The signal sequence occupies residues 1-21 (MRSQHVLILLLGLVCASQVLG). Positions 22–35 (KHLTKVKAKALHYD) are excised as a propeptide.

The protein belongs to the Cnidaria small cysteine-rich protein (SCRiP) family. delta subfamily. Contains 4 disulfide bonds.

The protein resides in the secreted. It is found in the nematocyst. In terms of biological role, this recombinant protein induces severe neurotoxicity on zebrafish larvae (Danio rerio) at a concentration of 230 mg/ml, but does not show toxicity when injected in blowfly larvae (Sarcophaga falculata). All fish incubated with this protein died within 200 minutes of exposure. Has also been claimed to be implied in calcification, but this function seems improbable. The sequence is that of Small cysteine-rich protein 2 from Acropora millepora (Staghorn coral).